The following is a 357-amino-acid chain: Peptide chain release factor 1 (357 aa).

At Gln234 the chain carries N5-methylglutamine. The segment at 283–313 (SKKQEQRSSNRKQQVGSGDRSERIRTYNFPQ) is disordered.

It belongs to the prokaryotic/mitochondrial release factor family. Post-translationally, methylated by PrmC. Methylation increases the termination efficiency of RF1.

The protein resides in the cytoplasm. Functionally, peptide chain release factor 1 directs the termination of translation in response to the peptide chain termination codons UAG and UAA. This chain is Peptide chain release factor 1 (prfA), found in Borreliella burgdorferi (strain ATCC 35210 / DSM 4680 / CIP 102532 / B31) (Borrelia burgdorferi).